Consider the following 110-residue polypeptide: Iron-sulfur cluster assembly protein CyaY (110 aa).

This sequence belongs to the frataxin family.

Its function is as follows. Involved in iron-sulfur (Fe-S) cluster assembly. May act as a regulator of Fe-S biogenesis. The polypeptide is Iron-sulfur cluster assembly protein CyaY (Paracidovorax citrulli (strain AAC00-1) (Acidovorax citrulli)).